Here is a 286-residue protein sequence, read N- to C-terminus: P2R1A-PPP2R2A-interacting phosphatase regulator 1 (286 aa).

Residues 1-46 (MAQEKMELDLELPAGTGASPAEGGGPGSGGLRRSNSAPLIHGLSDS) are disordered. Serine 34 carries the post-translational modification Phosphoserine. At serine 36 the chain carries Phosphoserine; by CHEK1. Residues serine 44, serine 47, serine 61, and serine 75 each carry the phosphoserine modification. A Glycyl lysine isopeptide (Lys-Gly) (interchain with G-Cter in SUMO1) cross-link involves residue lysine 88. Phosphoserine occurs at positions 142 and 146. Threonine 148 carries the post-translational modification Phosphothreonine. The interval 166–187 (SNGLPPSPIPSPTTRFTTRRSQ) is disordered. Residues 177–187 (PTTRFTTRRSQ) are compositionally biased toward low complexity. Phosphoserine is present on residues serine 186 and serine 188. A disordered region spans residues 238–286 (VSSDTLDGNSSSAGSSCNSPAKVSTTTDSPVSPAQAASPFIPVDELSSK). A compositionally biased stretch (low complexity) spans 245-256 (GNSSSAGSSCNS). The segment covering 258–269 (AKVSTTTDSPVS) has biased composition (polar residues). Phosphoserine is present on residues serine 266, serine 269, and serine 275.

The protein belongs to the FAM122 family. In terms of assembly, interacts with PPP2CA and PPP2R1A. Interacts (via its N-terminus) with PPP2R2A; the interaction is direct and this interaction inhibits PP2A activity. The CHEK1-mediated Ser-36 phosphorylated form interacts with 14-3-3 proteins. CHEK1-mediated phosphorylation at Ser-36 negatively regulates its ability to inhibit serine/threonine-protein phosphatase 2A (PP2A) activity. Phosphorylation leads to its release from the PP2A complex and its sequestration by 14-3-3 proteins in the cytoplasm resulting in its inability to translocate to the nucleus, where it otherwise inhibits PP2A.

Its subcellular location is the nucleus. It is found in the cytoplasm. Its function is as follows. Acts as an inhibitor of serine/threonine-protein phosphatase 2A (PP2A) activity. Inhibits PP2A activity by blocking the substrate binding site on PPP2R2A and the active site of PPP2CA. Potentiates ubiquitin-mediated proteasomal degradation of serine/threonine-protein phosphatase 2A catalytic subunit alpha (PPP2CA). Inhibits PP2A-mediated dephosphorylation of WEE1, promoting ubiquitin-mediated proteolysis of WEE1, thereby releasing G2/M checkpoint. This is P2R1A-PPP2R2A-interacting phosphatase regulator 1 from Rattus norvegicus (Rat).